Here is a 508-residue protein sequence, read N- to C-terminus: Steroid 17-alpha-hydroxylase/17,20 lyase (508 aa).

A substrate-binding site is contributed by asparagine 202. Position 442 (cysteine 442) interacts with heme.

This sequence belongs to the cytochrome P450 family. Requires heme as cofactor.

Its subcellular location is the endoplasmic reticulum membrane. The protein localises to the microsome membrane. The enzyme catalyses a C21-steroid + reduced [NADPH--hemoprotein reductase] + O2 = a 17alpha-hydroxy-C21-steroid + oxidized [NADPH--hemoprotein reductase] + H2O + H(+). The catalysed reaction is progesterone + reduced [NADPH--hemoprotein reductase] + O2 = 17alpha-hydroxyprogesterone + oxidized [NADPH--hemoprotein reductase] + H2O + H(+). It catalyses the reaction pregnenolone + reduced [NADPH--hemoprotein reductase] + O2 = 17alpha-hydroxypregnenolone + oxidized [NADPH--hemoprotein reductase] + H2O + H(+). It carries out the reaction 17alpha-hydroxyprogesterone + reduced [NADPH--hemoprotein reductase] + O2 = androst-4-ene-3,17-dione + acetate + oxidized [NADPH--hemoprotein reductase] + H2O + 2 H(+). The enzyme catalyses 17alpha-hydroxyprogesterone + reduced [NADPH--hemoprotein reductase] + O2 = 16alpha,17alpha-dihydroxyprogesterone + oxidized [NADPH--hemoprotein reductase] + H2O + H(+). The catalysed reaction is 16alpha,17alpha-dihydroxyprogesterone + reduced [NADPH--hemoprotein reductase] + O2 = 6beta,16alpha,17alpha-trihydroxyprogesterone + oxidized [NADPH--hemoprotein reductase] + H2O + H(+). It catalyses the reaction 17alpha-hydroxypregnenolone + reduced [NADPH--hemoprotein reductase] + O2 = 3beta-hydroxyandrost-5-en-17-one + acetate + oxidized [NADPH--hemoprotein reductase] + H2O + 2 H(+). It carries out the reaction 16alpha,17alpha-dihydroxypregnenolone + reduced [NADPH--hemoprotein reductase] + O2 = 3beta,16alpha-dihydroxy-androst-5-en-17-one + acetate + oxidized [NADPH--hemoprotein reductase] + H2O + 2 H(+). The enzyme catalyses 3beta-hydroxyandrost-5-en-17-one + reduced [NADPH--hemoprotein reductase] + O2 = 3beta,16alpha-dihydroxy-androst-5-en-17-one + oxidized [NADPH--hemoprotein reductase] + H2O + H(+). The catalysed reaction is androst-4-ene-3,17-dione + reduced [NADPH--hemoprotein reductase] + O2 = 16alpha-hydroxyandrost-4-ene-3,17-dione + oxidized [NADPH--hemoprotein reductase] + H2O + H(+). It participates in steroid hormone biosynthesis. Its pathway is steroid biosynthesis; glucocorticoid biosynthesis. Its activity is regulated as follows. Regulated predominantly by intracellular cAMP levels. The 17,20-lyase activity is stimulated by cytochrome b5, which acts as an allosteric effector increasing the Vmax of the lyase activity. Its function is as follows. A cytochrome P450 monooxygenase involved in corticoid and androgen biosynthesis. Catalyzes 17-alpha hydroxylation of C21 steroids, which is common for both pathways. A second oxidative step, required only for androgen synthesis, involves an acyl-carbon cleavage. The 17-alpha hydroxy intermediates, as part of adrenal glucocorticoids biosynthesis pathway, are precursors of cortisol. Hydroxylates steroid hormones, pregnenolone and progesterone to form 17-alpha hydroxy metabolites, followed by the cleavage of the C17-C20 bond to form C19 steroids, dehydroepiandrosterone (DHEA) and androstenedione. Has 16-alpha hydroxylase activity. Catalyzes 16-alpha hydroxylation of 17-alpha hydroxy pregnenolone, followed by the cleavage of the C17-C20 bond to form 16-alpha-hydroxy DHEA. Also 16-alpha hydroxylates androgens, relevant for estriol synthesis. Mechanistically, uses molecular oxygen inserting one oxygen atom into a substrate, and reducing the second into a water molecule, with two electrons provided by NADPH via cytochrome P450 reductase (CPR; NADPH-ferrihemoprotein reductase). The protein is Steroid 17-alpha-hydroxylase/17,20 lyase (CYP17A1) of Macaca fascicularis (Crab-eating macaque).